The chain runs to 344 residues: Uroporphyrinogen decarboxylase (344 aa).

Substrate contacts are provided by residues 27 to 31 (RQAGR), Phe-46, Asp-76, Tyr-151, Ser-206, and His-319.

Belongs to the uroporphyrinogen decarboxylase family. Homodimer.

The protein localises to the cytoplasm. It catalyses the reaction uroporphyrinogen III + 4 H(+) = coproporphyrinogen III + 4 CO2. It functions in the pathway porphyrin-containing compound metabolism; protoporphyrin-IX biosynthesis; coproporphyrinogen-III from 5-aminolevulinate: step 4/4. Its function is as follows. Catalyzes the decarboxylation of four acetate groups of uroporphyrinogen-III to yield coproporphyrinogen-III. This is Uroporphyrinogen decarboxylase from Halalkalibacterium halodurans (strain ATCC BAA-125 / DSM 18197 / FERM 7344 / JCM 9153 / C-125) (Bacillus halodurans).